A 213-amino-acid polypeptide reads, in one-letter code: Thiamine-phosphate synthase (213 aa).

4-amino-2-methyl-5-(diphosphooxymethyl)pyrimidine-binding positions include 40-44 and Asn-75; that span reads QFREK. Mg(2+) is bound by residues Asp-76 and Asp-95. Ser-113 serves as a coordination point for 4-amino-2-methyl-5-(diphosphooxymethyl)pyrimidine. Residue 139–141 coordinates 2-[(2R,5Z)-2-carboxy-4-methylthiazol-5(2H)-ylidene]ethyl phosphate; that stretch reads TPS. Residue Lys-142 coordinates 4-amino-2-methyl-5-(diphosphooxymethyl)pyrimidine. Residues Gly-171 and 191–192 each bind 2-[(2R,5Z)-2-carboxy-4-methylthiazol-5(2H)-ylidene]ethyl phosphate; that span reads IS.

Belongs to the thiamine-phosphate synthase family. Mg(2+) is required as a cofactor.

The enzyme catalyses 2-[(2R,5Z)-2-carboxy-4-methylthiazol-5(2H)-ylidene]ethyl phosphate + 4-amino-2-methyl-5-(diphosphooxymethyl)pyrimidine + 2 H(+) = thiamine phosphate + CO2 + diphosphate. It carries out the reaction 2-(2-carboxy-4-methylthiazol-5-yl)ethyl phosphate + 4-amino-2-methyl-5-(diphosphooxymethyl)pyrimidine + 2 H(+) = thiamine phosphate + CO2 + diphosphate. The catalysed reaction is 4-methyl-5-(2-phosphooxyethyl)-thiazole + 4-amino-2-methyl-5-(diphosphooxymethyl)pyrimidine + H(+) = thiamine phosphate + diphosphate. Its pathway is cofactor biosynthesis; thiamine diphosphate biosynthesis; thiamine phosphate from 4-amino-2-methyl-5-diphosphomethylpyrimidine and 4-methyl-5-(2-phosphoethyl)-thiazole: step 1/1. Its function is as follows. Condenses 4-methyl-5-(beta-hydroxyethyl)thiazole monophosphate (THZ-P) and 2-methyl-4-amino-5-hydroxymethyl pyrimidine pyrophosphate (HMP-PP) to form thiamine monophosphate (TMP). The chain is Thiamine-phosphate synthase from Staphylococcus aureus (strain bovine RF122 / ET3-1).